A 281-amino-acid polypeptide reads, in one-letter code: ATP phosphoribosyltransferase (281 aa).

The protein belongs to the ATP phosphoribosyltransferase family. Long subfamily. The cofactor is Mg(2+).

It localises to the cytoplasm. The catalysed reaction is 1-(5-phospho-beta-D-ribosyl)-ATP + diphosphate = 5-phospho-alpha-D-ribose 1-diphosphate + ATP. It functions in the pathway amino-acid biosynthesis; L-histidine biosynthesis; L-histidine from 5-phospho-alpha-D-ribose 1-diphosphate: step 1/9. Feedback inhibited by histidine. Functionally, catalyzes the condensation of ATP and 5-phosphoribose 1-diphosphate to form N'-(5'-phosphoribosyl)-ATP (PR-ATP). Has a crucial role in the pathway because the rate of histidine biosynthesis seems to be controlled primarily by regulation of HisG enzymatic activity. The sequence is that of ATP phosphoribosyltransferase from Natronomonas pharaonis (strain ATCC 35678 / DSM 2160 / CIP 103997 / JCM 8858 / NBRC 14720 / NCIMB 2260 / Gabara) (Halobacterium pharaonis).